The sequence spans 89 residues: Large ribosomal subunit protein eL31 (89 aa).

Belongs to the eukaryotic ribosomal protein eL31 family.

In Picrophilus torridus (strain ATCC 700027 / DSM 9790 / JCM 10055 / NBRC 100828 / KAW 2/3), this protein is Large ribosomal subunit protein eL31.